Here is a 129-residue protein sequence, read N- to C-terminus: Small ribosomal subunit protein uS13m (129 aa).

Positions 92–129 (HQDGSPLRGQRTHTNARTARKQIRKGNERRLPKEQATD) are disordered. The segment covering 116-129 (KGNERRLPKEQATD) has biased composition (basic and acidic residues).

Belongs to the universal ribosomal protein uS13 family. Part of the small ribosomal subunit.

The protein localises to the mitochondrion. Its function is as follows. Located at the top of the head of the small subunit, it contacts several helices of the 18S rRNA. The chain is Small ribosomal subunit protein uS13m (RPS13) from Zea mays (Maize).